Here is a 382-residue protein sequence, read N- to C-terminus: Histidinol-phosphate aminotransferase (382 aa).

Position 215 is an N6-(pyridoxal phosphate)lysine (Lys-215). A disordered region spans residues 363 to 382 (NIDNQNKTYSQTSSIRKGTI).

The protein belongs to the class-II pyridoxal-phosphate-dependent aminotransferase family. Histidinol-phosphate aminotransferase subfamily. As to quaternary structure, homodimer. Pyridoxal 5'-phosphate serves as cofactor.

It carries out the reaction L-histidinol phosphate + 2-oxoglutarate = 3-(imidazol-4-yl)-2-oxopropyl phosphate + L-glutamate. It participates in amino-acid biosynthesis; L-histidine biosynthesis; L-histidine from 5-phospho-alpha-D-ribose 1-diphosphate: step 7/9. The chain is Histidinol-phosphate aminotransferase from Yersinia pestis bv. Antiqua (strain Antiqua).